Here is a 59-residue protein sequence, read N- to C-terminus: Large ribosomal subunit protein bL33 (59 aa).

Residues 26–59 are disordered; sequence RYTTTKNKKNNTERLVLKKYNPNLKKHTEHKEIK.

The protein belongs to the bacterial ribosomal protein bL33 family.

This chain is Large ribosomal subunit protein bL33, found in Chlorobium phaeobacteroides (strain BS1).